An 830-amino-acid polypeptide reads, in one-letter code: Serine/threonine-protein kinase pkn2 (830 aa).

The Cytoplasmic segment spans residues 1–605 (MLAPDSLVLD…GELLRQRRRE (605 aa)). Residues 13-283 (FRVLRPLGSG…DALAAAHSAL (271 aa)) enclose the Protein kinase domain. Residues 19–27 (LGSGGMGEV) and lysine 42 each bind ATP. Aspartate 135 functions as the Proton acceptor in the catalytic mechanism. The interval 296-326 (VPQPGSGATPSSGTSVFGTGSASGSSSGPTG) is disordered. The segment covering 299 to 326 (PGSGATPSSGTSVFGTGSASGSSSGPTG) has biased composition (low complexity). The Guanylate cyclase domain occupies 396 to 511 (TVMLTDIQGF…EPMEVIEAVE (116 aa)). Residues 606–623 (AALVAGAVVLLGAGAAWL) form a helical membrane-spanning segment. At 624 to 830 (SQRNDAGTRA…AIKSLKQKSD (207 aa)) the chain is on the periplasmic side.

Belongs to the protein kinase superfamily. Ser/Thr protein kinase family.

Its subcellular location is the cell membrane. The enzyme catalyses L-seryl-[protein] + ATP = O-phospho-L-seryl-[protein] + ADP + H(+). The catalysed reaction is L-threonyl-[protein] + ATP = O-phospho-L-threonyl-[protein] + ADP + H(+). Regulates the activity of endogenous beta-lactamase or related enzymes, by blocking their secretion by phosphorylation, in response to an external signal yet to be identified. The chain is Serine/threonine-protein kinase pkn2 (pkn2) from Myxococcus xanthus.